The sequence spans 500 residues: ADP,ATP carrier protein 5 (500 aa).

The next 11 helical transmembrane spans lie at 26–46 (LGKF…QNIL), 62–82 (IAGF…VIIY), 94–114 (IFYY…FVIY), 149–169 (YIVY…LLFW), 184–204 (FYTL…FLMM), 224–244 (ITLV…CCLL), 287–307 (LWLL…VEAV), 328–348 (LYIL…NNVM), 357–377 (AVIS…LIVF), 381–401 (ILSL…VSIG), and 469–489 (SISP…IYAV).

This sequence belongs to the ADP/ATP translocase tlc family.

The protein localises to the cell membrane. Provides the rickettsial cell with host ATP in exchange for rickettsial ADP. This is an obligate exchange system. This energy acquiring activity is an important component of rickettsial parasitism. This chain is ADP,ATP carrier protein 5 (tlcE), found in Rickettsia typhi (strain ATCC VR-144 / Wilmington).